We begin with the raw amino-acid sequence, 510 residues long: Probable lysine--tRNA ligase, cytoplasmic (510 aa).

The protein belongs to the class-II aminoacyl-tRNA synthetase family. As to quaternary structure, homodimer.

It localises to the cytoplasm. The catalysed reaction is tRNA(Lys) + L-lysine + ATP = L-lysyl-tRNA(Lys) + AMP + diphosphate. This chain is Probable lysine--tRNA ligase, cytoplasmic, found in Encephalitozoon cuniculi (strain GB-M1) (Microsporidian parasite).